We begin with the raw amino-acid sequence, 177 residues long: Cytidylate kinase (177 aa).

Gly7–Thr15 is a binding site for ATP.

This sequence belongs to the cytidylate kinase family. Type 2 subfamily.

It is found in the cytoplasm. It carries out the reaction CMP + ATP = CDP + ADP. It catalyses the reaction dCMP + ATP = dCDP + ADP. This chain is Cytidylate kinase, found in Methanocorpusculum labreanum (strain ATCC 43576 / DSM 4855 / Z).